The primary structure comprises 204 residues: Vacuolar protein-sorting-associated protein 46 (204 aa).

Residues 1–103 (MSRNSAAGLE…ASMGQVCKGM (103 aa)) are interaction with VSP24. Residue Ser5 is modified to Phosphoserine. Coiled coils occupy residues 9-56 (LENT…RIYA) and 109-129 (NMNLQQITMIMDKFEQQFEDL). Positions 104-204 (DKALQNMNLQ…LAQRLRALRG (101 aa)) are interaction with VSP4. Residues 176–204 (NVPEIKAKEVNVDDEKEDKLAQRLRALRG) are interaction with VTA1. Positions 185-196 (VNVDDEKEDKLA) are enriched in basic and acidic residues. The disordered stretch occupies residues 185-204 (VNVDDEKEDKLAQRLRALRG).

The protein belongs to the SNF7 family. As to quaternary structure, self-associates. Interacts with VPS4 and VTA1. Interacts with IST1.

It is found in the endosome membrane. The protein resides in the endomembrane system. Its function is as follows. Class E VPS protein implicated in concentration and sorting of cargo proteins of the multivesicular body (MVB) for incorporation into intralumenal vesicles. The lumenal sequestrated membrane proteins will be targeted into the vacuole after fusion of the endosome with the vacuole. Probably acts as a peripherally associated component of the ESCRT-III complex, which appears to be critical for late steps in MVB sorting, such as membrane invagination and final cargo sorting and recruits late-acting components of the sorting machinery. The MVB pathway requires the sequential function of ESCRT-O, -I,-II and -III complex assemblies. Regulates the membrane association of VPS4. Can stimulate VPS4 ATPase activity directly or via VTA1. The sequence is that of Vacuolar protein-sorting-associated protein 46 (DID2) from Saccharomyces cerevisiae (strain ATCC 204508 / S288c) (Baker's yeast).